Consider the following 398-residue polypeptide: Acetate kinase 1 (398 aa).

Position 9 (Asn9) interacts with Mg(2+). Lys16 is an ATP binding site. Arg89 contacts substrate. Asp146 serves as the catalytic Proton donor/acceptor. ATP contacts are provided by residues 206–210 (HLGNG), 281–283 (DCR), and 329–333 (GIGEN). Glu384 provides a ligand contact to Mg(2+).

The protein belongs to the acetokinase family. In terms of assembly, homodimer. Requires Mg(2+) as cofactor. Mn(2+) serves as cofactor.

The protein resides in the cytoplasm. The enzyme catalyses acetate + ATP = acetyl phosphate + ADP. It participates in metabolic intermediate biosynthesis; acetyl-CoA biosynthesis; acetyl-CoA from acetate: step 1/2. In terms of biological role, catalyzes the formation of acetyl phosphate from acetate and ATP. Can also catalyze the reverse reaction. The polypeptide is Acetate kinase 1 (Aliivibrio fischeri (strain ATCC 700601 / ES114) (Vibrio fischeri)).